A 366-amino-acid polypeptide reads, in one-letter code: MSEALKIESRPIPAFYCCYLLRSKNRKSYYIGSTPNPARRLGQHNGSSKGGAKRTSMQGKRPWEMTCIVTGFPSKFAALQFEWAWQNTHATRHIDKDVRDARAEELQKGKKKATSPGRRRKRPPMSLEARLKNLHHLLSVDSFCRWPLNLRFFAPDVFVQWERHTTKMTTTLRKSITIQLTPAEIPKLASDVSTELQTHFIPEVIRAIPVAYEDCKQYIEKSRRVLEDDQRLGCGVCKNPADMSSSLILVCPIEACQTVSHLSCLSNKFLTEGGELETLVPLEGTCPGCRSCIKWATMIKELSLRTNGEEELKLLFKPKRKRKSDNPAESDAADGQALEQEDEELDETWMEDMSQDEEPSPVKKSR.

A GIY-YIG domain is found at 14 to 95; the sequence is AFYCCYLLRS…QNTHATRHID (82 aa). Disordered stretches follow at residues 31 to 59 and 102 to 124; these read IGST…SMQG and RAEE…KRPP. Over residues 109 to 123 the composition is skewed to basic residues; sequence GKKKATSPGRRRKRP. The SLX1-type zinc finger occupies 234–289; sequence CGVCKNPADMSSSLILVCPIEACQTVSHLSCLSNKFLTEGGELETLVPLEGTCPGC. A disordered region spans residues 317–366; the sequence is KPKRKRKSDNPAESDAADGQALEQEDEELDETWMEDMSQDEEPSPVKKSR. Residues 339–359 show a composition bias toward acidic residues; that stretch reads EQEDEELDETWMEDMSQDEEP.

It belongs to the SLX1 family. As to quaternary structure, forms a heterodimer with SLX4. The cofactor is a divalent metal cation.

The protein localises to the nucleus. Catalytic subunit of the SLX1-SLX4 structure-specific endonuclease that resolves DNA secondary structures generated during DNA repair and recombination. Has endonuclease activity towards branched DNA substrates, introducing single-strand cuts in duplex DNA close to junctions with ss-DNA. The polypeptide is Structure-specific endonuclease subunit SLX1 (Phaeosphaeria nodorum (strain SN15 / ATCC MYA-4574 / FGSC 10173) (Glume blotch fungus)).